The following is an 858-amino-acid chain: DNA replication licensing factor mcm4-A (858 aa).

A disordered region spans residues 1–125 (MSSPTSTPSR…ARKVKQVDLH (125 aa)). Polar residues-rich tracts occupy residues 54–68 (SPSGDIQSPLFSSPA) and 79–94 (LDLSSPLTYGTPSSRV). The C4-type zinc-finger motif lies at 301–326 (CQVCAFTTRVEIDRGRIAEPSVCKHC). In terms of domain architecture, MCM spans 453 to 662 (IYERLAAALA…YDRRLAHHLV (210 aa)). Tyrosine 466, arginine 492, lysine 511, serine 512, asparagine 613, arginine 638, arginine 727, and glutamate 730 together coordinate ATP. An Arginine finger motif is present at residues 637–640 (SRFD).

The protein belongs to the MCM family. In terms of assembly, component of the mcm2-7 complex (RLF-M). The complex forms a toroidal hexameric ring with the proposed subunit order mcm2-mcm6-mcm4-mcm7-mcm3-mcm5. The heterodimer of mmcm3/mcm5 interacts with mcm4, mmcm6, mcm7 and weakly with mcm2. Component of the CMG helicase complex, composed of the mcm2-7 complex, the GINS complex and cdc45. Hyperphosphorylated during mitosis in a mechanism requiring cdc2-cyclin B and other kinases. Undergoes dephosphorylation after exiting mitosis, existing in a partially phosphorylated state in the cytosolic interphase mcm complex which associates with the pre-replication complexes (pre-Rcs). Complete dephosphorylation inactivates the mcm complex, preventing its binding to chromatin. Becomes actively phosphorylated during S phase once the mcm complex is assembled on the chromatin. This chromatin-associated phosphorylation occurs during the activation of the pre-Rcs and is independent of cdks. Phosphorylated by the cdc7-dbf4b complex.

Its subcellular location is the nucleus. The protein resides in the chromosome. It carries out the reaction ATP + H2O = ADP + phosphate + H(+). Its function is as follows. Acts as a component of the MCM2-7 complex (MCM complex) which is the replicative helicase essential for 'once per cell cycle' DNA replication initiation and elongation in eukaryotic cells. Core component of CDC45-MCM-GINS (CMG) helicase, the molecular machine that unwinds template DNA during replication, and around which the replisome is built. The active ATPase sites in the MCM2-7 ring are formed through the interaction surfaces of two neighboring subunits such that a critical structure of a conserved arginine finger motif is provided in trans relative to the ATP-binding site of the Walker A box of the adjacent subunit. The six ATPase active sites, however, are likely to contribute differentially to the complex helicase activity. This chain is DNA replication licensing factor mcm4-A (mcm4-a), found in Xenopus laevis (African clawed frog).